Here is a 106-residue protein sequence, read N- to C-terminus: Large ribosomal subunit protein P2 (106 aa).

The interval 80 to 106 (AAAAPAKKVVEEKKEESDDDMGMGLFD) is disordered.

Belongs to the eukaryotic ribosomal protein P1/P2 family. As to quaternary structure, P1 and P2 exist as dimers at the large ribosomal subunit. In terms of processing, phosphorylated.

Its function is as follows. Plays an important role in the elongation step of protein synthesis. The polypeptide is Large ribosomal subunit protein P2 (rplp2) (Dictyostelium discoideum (Social amoeba)).